The following is a 398-amino-acid chain: Arylacetamide deacetylase (398 aa).

Residues 1–4 (GVKT) lie on the Cytoplasmic side of the membrane. The helical; Signal-anchor for type II membrane protein transmembrane segment at 5–22 (VLLLIVGVLGAYYVYTPL) threads the bilayer. At 23–398 (PDNIEEPWRL…QYFEWLRENV (376 aa)) the chain is on the lumenal side. Asn77 is a glycosylation site (N-linked (GlcNAc...) asparagine). The short motif at 110–112 (HGG) is the Involved in the stabilization of the negatively charged intermediate by the formation of the oxyanion hole element. Cys115 and Cys339 are oxidised to a cystine. Ser188 is a catalytic residue. Residue Asn281 is glycosylated (N-linked (GlcNAc...) asparagine). Active-site residues include Asp342 and His372.

It belongs to the 'GDXG' lipolytic enzyme family. Post-translationally, glycosylated.

It is found in the endoplasmic reticulum membrane. Its subcellular location is the microsome membrane. It carries out the reaction a triacylglycerol + H2O = a diacylglycerol + a fatty acid + H(+). Inhibited by diisopropylphosphofluoridate (DFP). Displays cellular triglyceride lipase activity in liver, increases the levels of intracellular fatty acids derived from the hydrolysis of newly formed triglyceride stores and plays a role in very low-density lipoprotein assembly. Displays serine esterase activity in liver. Deacetylates a variety of arylacetamide substrates, including xenobiotic compounds and procarcinogens, converting them to the primary arylamide compounds and increasing their toxicity. This Oryctolagus cuniculus (Rabbit) protein is Arylacetamide deacetylase.